The chain runs to 274 residues: Dermonecrotic toxin SdSicTox-betaIIB2ii (274 aa).

The active site involves His-5. Positions 25 and 27 each coordinate Mg(2+). His-41 serves as the catalytic Nucleophile. Cystine bridges form between Cys-45-Cys-51 and Cys-47-Cys-190. Asp-85 serves as a coordination point for Mg(2+).

The protein belongs to the arthropod phospholipase D family. Class II subfamily. Requires Mg(2+) as cofactor. As to expression, expressed by the venom gland.

It localises to the secreted. It carries out the reaction an N-(acyl)-sphingosylphosphocholine = an N-(acyl)-sphingosyl-1,3-cyclic phosphate + choline. The enzyme catalyses an N-(acyl)-sphingosylphosphoethanolamine = an N-(acyl)-sphingosyl-1,3-cyclic phosphate + ethanolamine. It catalyses the reaction a 1-acyl-sn-glycero-3-phosphocholine = a 1-acyl-sn-glycero-2,3-cyclic phosphate + choline. The catalysed reaction is a 1-acyl-sn-glycero-3-phosphoethanolamine = a 1-acyl-sn-glycero-2,3-cyclic phosphate + ethanolamine. In terms of biological role, dermonecrotic toxins cleave the phosphodiester linkage between the phosphate and headgroup of certain phospholipids (sphingolipid and lysolipid substrates), forming an alcohol (often choline) and a cyclic phosphate. This toxin acts on sphingomyelin (SM). It may also act on ceramide phosphoethanolamine (CPE), lysophosphatidylcholine (LPC) and lysophosphatidylethanolamine (LPE), but not on lysophosphatidylserine (LPS), and lysophosphatidylglycerol (LPG). It acts by transphosphatidylation, releasing exclusively cyclic phosphate products as second products. Induces dermonecrosis, hemolysis, increased vascular permeability, edema, inflammatory response, and platelet aggregation. This Sicarius cf. damarensis (strain GJB-2008) (Six-eyed sand spider) protein is Dermonecrotic toxin SdSicTox-betaIIB2ii.